Consider the following 316-residue polypeptide: Protein prune homolog 2 (316 aa).

Positions 1 to 24 (MDIPLDAAEIRPEPPNSLDLNGSS) are disordered. Residues 128-285 (IEPYKKVISH…TIVKLDEELR (158 aa)) form the CRAL-TRIO domain. Residues 287–316 (SESPKAGCLPNEPEMNTLEEEFENKMGDND) are disordered.

The protein resides in the cytoplasm. The sequence is that of Protein prune homolog 2 (Prune2) from Xenopus tropicalis (Western clawed frog).